The chain runs to 240 residues: Thyroid transcription factor 1-associated protein 26 (240 aa).

Residues 104–181 (LRKQQRKAGL…QEEYERVQAK (78 aa)) are disordered. Positions 131–149 (TEQTSSEEPPGGHQPQPEE) are enriched in low complexity. Residues 171-181 (AQEEYERVQAK) show a composition bias toward basic and acidic residues.

It belongs to the TAP26 family. Interacts with NKX2-1.

The protein resides in the nucleus. Functionally, component of the transcription complexes of the pulmonary surfactant-associated protein-B (SFTPB) and -C (SFTPC). Enhances homeobox protein Nkx-2.1-activated SFTPB and SFTPC promoter activities. The protein is Thyroid transcription factor 1-associated protein 26 (Ccdc59) of Mus musculus (Mouse).